We begin with the raw amino-acid sequence, 111 residues long: DIVLTQSPASLAVSLGQRATISCRASESVDSYGNSFMHWYQQKPGQPPKLLIYRASNLESGIPARFSGSGSRTDFTLTINPVEADDVATYYCQQSNEDPYTFGGGTKLEIK.

Residues 1-23 form a framework-1 region; the sequence is DIVLTQSPASLAVSLGQRATISC. The cysteines at positions 23 and 92 are disulfide-linked. The interval 24-38 is complementarity-determining-1; it reads RASESVDSYGNSFMH. The tract at residues 39-53 is framework-2; it reads WYQQKPGQPPKLLIY. The segment at 54 to 60 is complementarity-determining-2; that stretch reads RASNLES. Positions 61-92 are framework-3; the sequence is GIPARFSGSGSRTDFTLTINPVEADDVATYYC. A complementarity-determining-3 region spans residues 93–101; that stretch reads QQSNEDPYT. Positions 102–111 are framework-4; that stretch reads FGGGTKLEIK.

This Mus musculus (Mouse) protein is Ig kappa chain V-III region PC 3741/TEPC 111.